The sequence spans 131 residues: uncharacterized protein (131 aa).

The signal sequence occupies residues 1-26 (MKKIVAAIVVIGLVFIAFFYLYSRSG).

This is an uncharacterized protein from Bacillus subtilis (strain 168).